The chain runs to 327 residues: Xylosidase/arabinosidase 43A (327 aa).

Catalysis depends on Asp12, which acts as the Proton acceptor. Glu228 functions as the Proton donor in the catalytic mechanism.

It belongs to the glycosyl hydrolase 43 family.

It is found in the secreted. It carries out the reaction Hydrolysis of (1-&gt;4)-beta-D-xylans, to remove successive D-xylose residues from the non-reducing termini.. The enzyme catalyses Hydrolysis of terminal non-reducing alpha-L-arabinofuranoside residues in alpha-L-arabinosides.. Activity is inhibited by Ag(+), Li(+), Pb(2+), Cu(2+), Cr(3+), Co(3+), Fe(3+), Ni(2+), Mg(2+), Zn(2+), EDTA and SDS; but not by Mn(2+), Ca(2+) and beta-mercaptoethanol. Bifunctional beta-xylosidase/alpha-L-arabinosidases with a low level of xylanase activity. Is most active on 4-nitrophenyl beta-D-xylopyranoside (pNPX) (defined as 100%), moderate on p-nitrophenyl-alpha-L-arabinofuranoside (pNPA) (23.7%), and weak on beechwood xylan (15.9%) and birchwood xylan (15.2%). Is able to attack xylooligosacchardies with degrees of polymerisation of 2-5, releasing the amounts of reducing sugars in the order of xylopentose &gt; xylotetraose &gt; xylotriose &gt; xylobiose, i.e. the rate of xylose released from xylooligosacchardies increased with the chain length. No activity is detected in the presence of carboxymethyl cellulose-sodium (CMC-Na), sugar beet arabinan, AZCL-arabinan (debranched), 4-nitrophenyl a-D - galactopyranoside, 2-nitrophenyl beta-D-galactopyranoside, and 4-nitrophenyl alpha-D-glucopyranoside. The protein is Xylosidase/arabinosidase 43A of Humicola insolens (Soft-rot fungus).